A 145-amino-acid polypeptide reads, in one-letter code: 3-dehydroquinate dehydratase (145 aa).

Y23 serves as the catalytic Proton acceptor. Positions 74, 80, and 87 each coordinate substrate. The active-site Proton donor is the H100. Substrate-binding positions include 101 to 102 (LS) and R111.

The protein belongs to the type-II 3-dehydroquinase family. Homododecamer.

It carries out the reaction 3-dehydroquinate = 3-dehydroshikimate + H2O. It functions in the pathway metabolic intermediate biosynthesis; chorismate biosynthesis; chorismate from D-erythrose 4-phosphate and phosphoenolpyruvate: step 3/7. Catalyzes a trans-dehydration via an enolate intermediate. The protein is 3-dehydroquinate dehydratase of Halalkalibacterium halodurans (strain ATCC BAA-125 / DSM 18197 / FERM 7344 / JCM 9153 / C-125) (Bacillus halodurans).